A 459-amino-acid chain; its full sequence is Pentatricopeptide repeat-containing protein At1g07740, mitochondrial (459 aa).

The N-terminal 20 residues, 1–20 (MRRRLSSVLINNQCIASQRH), are a transit peptide targeting the mitochondrion. The segment at 19–41 (RHYHTSRPEKPTKKASSHEPTHK) is disordered. Positions 24-41 (SRPEKPTKKASSHEPTHK) are enriched in basic and acidic residues. PPR repeat units follow at residues 80–114 (DYPS…NVRC), 115–149 (RESL…DCVR), 150–184 (TIQS…RLRP), 185–219 (NSVS…EVQP), 220–254 (SVVT…RIRP), 255–289 (NAVT…GCKP), 290–324 (GLVN…RIKP), 325–359 (DVVI…GCKP), 360–394 (NAAT…RHCP), and 395–429 (TPAT…NLSF).

This sequence belongs to the PPR family. P subfamily.

The protein localises to the mitochondrion. The protein is Pentatricopeptide repeat-containing protein At1g07740, mitochondrial of Arabidopsis thaliana (Mouse-ear cress).